We begin with the raw amino-acid sequence, 51 residues long: Sperm protamine P1 (51 aa).

Cystine bridges form between Cys7–Cys15 and Cys38–Cys48.

Belongs to the protamine P1 family. In terms of assembly, cross-linked by interchain disulfide bonds around the DNA-helix. Phosphorylated by SRPK1. Testis.

It is found in the nucleus. The protein resides in the chromosome. Its function is as follows. Protamines substitute for histones in the chromatin of sperm during the haploid phase of spermatogenesis. They compact sperm DNA into a highly condensed, stable and inactive complex. In Mus musculus (Mouse), this protein is Sperm protamine P1 (Prm1).